An 876-amino-acid polypeptide reads, in one-letter code: MQEHYQPAAIEPAAQKKWDDARISNVSEDASKPKYYCLSMFPYPSGKLHMGHVRNYTIGDVLSRFKLLNGFNVMQPMGWDAFGMPAENAAMKNNVAPAAWTYDNIEYMKTQLKSLGFAIDWEREVATCKPEYYRWEQWLFTKLFEKGIVYRKNGTVNWDPVDQTVLANEQVIDGRGWRSGALIEKREIPMYYFKITDYAEELLNDLDKLEHWPEQVKTMQRNWIGKSRGMTVRFAVSDDSKQGLEGDYAKFLQVYTTRPDTLMGATYVAVAAEHPLATAAAADKPELQAFIAECKAGSVAEADMATMEKKGVPTGRYVVNPLNGDKLEVWIANYVLWGYGDGAVMAVPAHDERDFEFAAKYNLPKKQVIAVGDNAFDANRWQEWYGDKENGVLVNSGDLDGLDFQTAFDAVAAKLQSQGAGEPKTQYRLRDWGISRQRYWGCPIPIVHCEKCGDVPVPADQLPVVLPENVVPDGMGSPLAKMPEFYETSCPCCGGAAKRETDTMDTFMESSWYFFRYMSPKFSDGMVSAESAKYWGAVDQYIGGIEHAILHLLYARFFTKLMRDEGLVNVDEPFERLLTQGMVVCETYYRENDKGGKDWINPADVELTFDDKGRPVSAVLKADGLPVVISGTEKMSKSKNNGVDPQELINAYGADTARLFMMFAAPPEQSLEWSDSGVEGAHRFLRRLWRTVYEYLKQGGAVKAFAGNQDGLSKELKDLRHKLHSTTAKVSDDYGRRQQFNTAIAAVMELLNQYDKTDTGSEQGRAVAQEVLEAAVRLLWPIVPHICETLWSELNGAKLWEAGWPTVDEAALVKSEIEVMVQVNGKLRGKITVAADASKADLEAAALANEGAVKFMEGKPAKKIIVVPGRLVNIVV.

The 'HIGH' region motif lies at 42 to 52 (PYPSGKLHMGH). The 'KMSKS' region motif lies at 634–638 (KMSKS). Lys-637 serves as a coordination point for ATP.

This sequence belongs to the class-I aminoacyl-tRNA synthetase family.

The protein resides in the cytoplasm. It carries out the reaction tRNA(Leu) + L-leucine + ATP = L-leucyl-tRNA(Leu) + AMP + diphosphate. The polypeptide is Leucine--tRNA ligase (Neisseria gonorrhoeae (strain ATCC 700825 / FA 1090)).